Reading from the N-terminus, the 234-residue chain is Glucosamine-6-phosphate deaminase (234 aa).

D62 functions as the Proton acceptor; for enolization step in the catalytic mechanism. N128 (for ring-opening step) is an active-site residue. The active-site Proton acceptor; for ring-opening step is the H130. E135 acts as the For ring-opening step in catalysis.

The protein belongs to the glucosamine/galactosamine-6-phosphate isomerase family. NagB subfamily.

It carries out the reaction alpha-D-glucosamine 6-phosphate + H2O = beta-D-fructose 6-phosphate + NH4(+). It functions in the pathway amino-sugar metabolism; N-acetylneuraminate degradation; D-fructose 6-phosphate from N-acetylneuraminate: step 5/5. Its function is as follows. Catalyzes the reversible isomerization-deamination of glucosamine 6-phosphate (GlcN6P) to form fructose 6-phosphate (Fru6P) and ammonium ion. The protein is Glucosamine-6-phosphate deaminase of Streptococcus equi subsp. zooepidemicus (strain MGCS10565).